A 609-amino-acid chain; its full sequence is UvrABC system protein C (609 aa).

The 79-residue stretch at 16–94 folds into the GIY-YIG domain; that stretch reads SSAGVYRMYD…IKQYMPRYNV (79 aa). The UVR domain maps to 203–238; that stretch reads QQVIATLVGKMEQAAMDLNYEDAARYRDQISALRRV.

This sequence belongs to the UvrC family. As to quaternary structure, interacts with UvrB in an incision complex.

The protein localises to the cytoplasm. Functionally, the UvrABC repair system catalyzes the recognition and processing of DNA lesions. UvrC both incises the 5' and 3' sides of the lesion. The N-terminal half is responsible for the 3' incision and the C-terminal half is responsible for the 5' incision. This chain is UvrABC system protein C, found in Shewanella loihica (strain ATCC BAA-1088 / PV-4).